Reading from the N-terminus, the 166-residue chain is Cofilin-2 (166 aa).

N-acetylalanine is present on Ala2. Ser3 is subject to Phosphoserine. In terms of domain architecture, ADF-H spans 4-153 (GVTVNDEVIK…KDRSTLGEKL (150 aa)). Thr6 carries the phosphothreonine modification. The Nuclear localization signal motif lies at 30 to 34 (KKRKK).

It belongs to the actin-binding proteins ADF family. As to quaternary structure, interacts with CSRP3; possibly two molecules of CFL2 can interact with one molecule if CSRP3. In terms of processing, the phosphorylation of Ser-24 may prevent recognition of the nuclear localization signal. In terms of tissue distribution, predominantly expressed in skeletal muscle.

Its subcellular location is the nucleus matrix. It localises to the cytoplasm. The protein resides in the cytoskeleton. Controls reversibly actin polymerization and depolymerization in a pH-sensitive manner. It has the ability to bind G- and F-actin in a 1:1 ratio of cofilin to actin. It is the major component of intranuclear and cytoplasmic actin rods. Required for muscle maintenance. May play a role during the exchange of alpha-actin forms during the early postnatal remodeling of the sarcomere. The chain is Cofilin-2 (Cfl2) from Mus musculus (Mouse).